We begin with the raw amino-acid sequence, 351 residues long: Histidinol-phosphate aminotransferase (351 aa).

Residues 1 to 26 (MRFRAELEPLSPYNPPRASQEAAAER) are disordered. The residue at position 223 (lysine 223) is an N6-(pyridoxal phosphate)lysine.

This sequence belongs to the class-II pyridoxal-phosphate-dependent aminotransferase family. Histidinol-phosphate aminotransferase subfamily. As to quaternary structure, homodimer. Pyridoxal 5'-phosphate serves as cofactor.

It catalyses the reaction L-histidinol phosphate + 2-oxoglutarate = 3-(imidazol-4-yl)-2-oxopropyl phosphate + L-glutamate. The protein operates within amino-acid biosynthesis; L-histidine biosynthesis; L-histidine from 5-phospho-alpha-D-ribose 1-diphosphate: step 7/9. In Rubrobacter xylanophilus (strain DSM 9941 / JCM 11954 / NBRC 16129 / PRD-1), this protein is Histidinol-phosphate aminotransferase.